An 832-amino-acid polypeptide reads, in one-letter code: FAST kinase domain-containing protein 1, mitochondrial (832 aa).

Residues 765-825 (VAIEFLDSKA…KDAWMDYLRK (61 aa)) enclose the RAP domain.

The protein belongs to the FAST kinase family.

It localises to the mitochondrion. In terms of biological role, may regulate the stability of some mitochondrial mRNA species. The polypeptide is FAST kinase domain-containing protein 1, mitochondrial (fastkd1) (Xenopus laevis (African clawed frog)).